A 162-amino-acid chain; its full sequence is Phosphopantetheine adenylyltransferase (162 aa).

T10 is a substrate binding site. ATP is bound by residues 10–11 (TF) and H18. Substrate contacts are provided by K42, L74, and R88. ATP-binding positions include 89-91 (GLR), E99, and 124-130 (FSCISST).

This sequence belongs to the bacterial CoaD family. In terms of assembly, homohexamer. Mg(2+) serves as cofactor.

The protein resides in the cytoplasm. It catalyses the reaction (R)-4'-phosphopantetheine + ATP + H(+) = 3'-dephospho-CoA + diphosphate. It functions in the pathway cofactor biosynthesis; coenzyme A biosynthesis; CoA from (R)-pantothenate: step 4/5. Reversibly transfers an adenylyl group from ATP to 4'-phosphopantetheine, yielding dephospho-CoA (dPCoA) and pyrophosphate. The polypeptide is Phosphopantetheine adenylyltransferase (Francisella tularensis subsp. mediasiatica (strain FSC147)).